The sequence spans 485 residues: Glutamyl-tRNA(Gln) amidotransferase subunit A (485 aa).

Residues K79 and S154 each act as charge relay system in the active site. The active-site Acyl-ester intermediate is S178.

Belongs to the amidase family. GatA subfamily. As to quaternary structure, heterotrimer of A, B and C subunits.

It catalyses the reaction L-glutamyl-tRNA(Gln) + L-glutamine + ATP + H2O = L-glutaminyl-tRNA(Gln) + L-glutamate + ADP + phosphate + H(+). Functionally, allows the formation of correctly charged Gln-tRNA(Gln) through the transamidation of misacylated Glu-tRNA(Gln) in organisms which lack glutaminyl-tRNA synthetase. The reaction takes place in the presence of glutamine and ATP through an activated gamma-phospho-Glu-tRNA(Gln). The protein is Glutamyl-tRNA(Gln) amidotransferase subunit A of Sulfurihydrogenibium sp. (strain YO3AOP1).